The following is a 2496-amino-acid chain: Hornerin (2496 aa).

Residues 1-81 (MPKLLESIVT…TEYLLMILKL (81 aa)) form an S-100-like region. 2 EF-hand domains span residues 13-48 (DVFYQYATEYGNCDMLSKEEMKELLVTEFHQILKNP) and 49-84 (DDPDTVDIIMQNLDRDHNHKVDFTEYLLMILKLTKA). The Ca(2+) site is built by Met27, Glu32, Asp62, Asp64, Asn66, Lys68, and Glu73. The segment at 82 to 98 (TKACNKIIGKDYCQASG) is s (spacer). The disordered stretch occupies residues 97 to 2496 (SGSKQKNHSH…SGQTSGCGSG (2400 aa)). A 1; truncated repeat occupies 99–145 (SKQKNHSHQHQEEQSKKETENKEQKGSISSSAGENDSYSRGSRGSNK). The span at 107 to 123 (QHQEEQSKKETENKEQK) shows a compositional bias: basic and acidic residues. Residues 124–134 (GSISSSAGEND) show a composition bias toward polar residues. Residues 144–153 (NKSKSKKLRK) show a composition bias toward basic residues. 27 consecutive repeat copies span residues 146–231 (SKSK…NGKH), 232–321 (GSSS…FGSS), 326–400 (SGQS…SEQY), 401–491 (GASS…SCCG), 492–577 (QSSG…SGRY), 578–668 (GASS…SGSR), 669–748 (HGSG…SGRC), 749–839 (GASS…SCCG), 840–926 (QSSG…SGRY), 927–1017 (GASS…SGSR), 1018–1097 (HGSG…SGRC), 1098–1188 (GASS…SCCG), 1189–1274 (QSSG…SGRY), 1275–1365 (GASS…SGSR), 1366–1445 (HGSG…SGRC), 1446–1536 (GASS…SCCG), 1537–1622 (QSSG…SGRY), 1623–1713 (GASS…SGSR), 1714–1793 (HGSG…SGRC), 1794–1884 (GASS…SCCG), 1885–1970 (QSSG…SGRY), 1971–2061 (GASS…SGSR), 2062–2141 (HGSG…SGRC), 2142–2232 (GASS…SGSR), 2233–2312 (HGSG…SGRY), 2313–2403 (GASS…SGSR), and 2410–2496 (QFPI…CGSG). 3 stretches are compositionally biased toward low complexity: residues 183 to 194 (SGFSNSSGNGRP), 200 to 246 (SGFP…SGHS), and 270 to 286 (RESSGSQEYSSGSSEEP). 2 stretches are compositionally biased toward polar residues: residues 294–319 (RKNSSTCGKNGSYSGQSTGRHQQGFG) and 326–355 (SGQSITSANHGSHSNQSSCSGTRECGSSES). 3 stretches are compositionally biased toward low complexity: residues 362–379 (VSGSGHSSSTGKYTSTSG), 394–415 (SSGSEQYGASSGQSSGCSSGQS), and 423–448 (SGSRNSSTQSRGRSTSRESSTSQQFG). Residues 449-464 (SGSGRSSGFSQGGSGQ) show a composition bias toward gly residues. Positions 465–565 (GRSSRGGQQG…GQTSSSTRQG (101 aa)) are enriched in low complexity. 2 positions are modified to phosphoserine: Ser506 and Ser508. The segment covering 566–576 (SGQGQASGSGR) has biased composition (gly residues). Composition is skewed to low complexity over residues 577 to 593 (YGASSGQTSGCGSGQST) and 600 to 625 (SGSRNSSTQSRGRSTSRESSTSQRYG). A compositionally biased stretch (gly residues) spans 626–641 (SGSGESSGFSQGGSGQ). 2 stretches are compositionally biased toward low complexity: residues 642–670 (GRSSRGGQQGSFSGQTSGRSQHQSGSRHG) and 679–713 (SGQQGSHHGHSSSSGTHNSGSSQSSSTQWSHGSGS). Position 646 is an omega-N-methylarginine (Arg646). A Phosphoserine modification is found at Ser716. The segment covering 723-736 (GSTSGQTASSTRQG) has biased composition (low complexity). The segment covering 737 to 747 (SGQGQASGSGR) has biased composition (gly residues). 4 stretches are compositionally biased toward low complexity: residues 748–764 (CGASSGQTSGCGSGQST), 771–796 (SGSRNSSTQSRGRSTSRESSTSQRFG), 804–884 (GFSQ…SRPA), and 891–914 (SGRSSGLGQYGSPSGQTSSSTRQG). Position 815 is a phosphoserine (Ser815). Residues 915–925 (SGQGQASGSGR) are compositionally biased toward gly residues. 2 stretches are compositionally biased toward low complexity: residues 926–942 (YGASSGQTSGCGSGQST) and 949–974 (SGSRNSSTQSRGRSTSRESSTSQRYG). Residues 975 to 990 (SGSGESSGFSQGGSGQ) are compositionally biased toward gly residues. 3 stretches are compositionally biased toward low complexity: residues 991–1019 (GRSSRGGQQGSFSGQTSGRSQHQSGSRHG), 1028–1062 (SGQQGSHHGHSSSSGTHNSGSSQSSSTQWSHGSGS), and 1072–1085 (GSTSGQTASSTRQG). Arg995 carries the post-translational modification Omega-N-methylarginine. Gly residues predominate over residues 1086 to 1096 (SGQGQASGSGR). Composition is skewed to low complexity over residues 1097-1113 (CGASSGQTSGCGSGQST), 1120-1145 (SGSRNSSTQSRGRSTSRESSTSQRFG), and 1153-1262 (GFSQ…TRQG). Ser1229 carries the phosphoserine modification. Over residues 1263–1273 (SGQGQASGSGR) the composition is skewed to gly residues. Residues 1281–1292 (TSGCRSGQSTRY) are compositionally biased toward polar residues. Low complexity predominate over residues 1298–1322 (GSRNSSTQSRGRSTSRESSTSQRYG). The segment covering 1323–1338 (SGSGESSGFSQGGSGQ) has biased composition (gly residues). Low complexity-rich tracts occupy residues 1339 to 1367 (GRSSRGGQQGSFSGQTSGRNQHQSGSRHG), 1376 to 1410 (SGQQGSHHGHSSSSGTHNSGSSQSSSTQWSHGSGS), and 1420 to 1433 (GSTSGQTASSTRQG). An Omega-N-methylarginine modification is found at Arg1343. Over residues 1434–1444 (SGQGQASGSGR) the composition is skewed to gly residues. Low complexity-rich tracts occupy residues 1445-1461 (CGASSGQTSGCGSGQST), 1468-1493 (SGSRNSSTQSRGRSTSRESSTSQRFG), and 1501-1610 (GFSQ…TRQG). Phosphoserine is present on residues Ser1551 and Ser1553. The span at 1611–1621 (SGQGQASGSGR) shows a compositional bias: gly residues. Low complexity-rich tracts occupy residues 1622–1631 (YGASSGQTSG) and 1645–1670 (SGSRNSSTQSRGRSTSRESSTSQRCG). Ser1650 bears the Phosphoserine mark. A compositionally biased stretch (gly residues) spans 1671 to 1686 (SGSGESSGFSQGGSGQ). 3 stretches are compositionally biased toward low complexity: residues 1687-1715 (GRSSRGGQQGSFSGQTSGRSQHQSGSRHG), 1724-1758 (SGQQGSHHGHSSSSGTHNSGSSQSSSTQWSHGSGS), and 1768-1781 (GSTSGQTASSTRQG). Residue Arg1691 is modified to Omega-N-methylarginine. A compositionally biased stretch (gly residues) spans 1782 to 1792 (SGQGQASGSGR). A compositionally biased stretch (polar residues) spans 1800-1811 (TSGCGSDQSTRY). Low complexity-rich tracts occupy residues 1816 to 1841 (SGSRNSSTQSRGRSTSRESSTSQRFG) and 1849 to 1958 (GFSQ…TRQG). The span at 1959 to 1969 (SGQGQASGSGR) shows a compositional bias: gly residues. Low complexity-rich tracts occupy residues 1970–1986 (YGASSGQTSGCGSGQST) and 1993–2018 (SGSRNSSTQSRGRSTSRESSTSQRYG). A Phosphoserine modification is found at Ser2011. Over residues 2019–2034 (SGSGESSGFSQGGSGQ) the composition is skewed to gly residues. 2 stretches are compositionally biased toward low complexity: residues 2035 to 2063 (GRSSRGGQQGSFSGQTSGRSQHQSGSRHG) and 2072 to 2106 (SGQQGSHHGHSSSSGTHNSGSSQSSSTQWSHGSGS). An Omega-N-methylarginine modification is found at Arg2039. Residues Ser2109 and Ser2124 each carry the phosphoserine modification. Over residues 2116–2129 (GSTSGQTASSTRQG) the composition is skewed to low complexity. Positions 2130–2140 (SGQGQASGSGR) are enriched in gly residues. Composition is skewed to low complexity over residues 2141-2157 (CGASSGQTSGCGSGQST) and 2164-2189 (SGSRNSSTQSRGRSTSRESSTSQRYG). Positions 2190–2205 (SGSGESSGFSQGGSGQ) are enriched in gly residues. Low complexity-rich tracts occupy residues 2206–2234 (GRSSRGGQQGSFSGQTSGRSQHQSGSRHG) and 2243–2300 (SGQQ…TRQG). Arg2210 is modified (omega-N-methylarginine). The segment covering 2301-2311 (SGQGQASGSGR) has biased composition (gly residues). Low complexity-rich tracts occupy residues 2312–2328 (YGASSGQTSGCGSGQST) and 2335–2360 (SGSRNSSTQSRGRSTSRESSTSQRYG). Ser2353 carries the post-translational modification Phosphoserine. A compositionally biased stretch (gly residues) spans 2361–2376 (SGSGESSGFSQGGSGQ). Low complexity-rich tracts occupy residues 2377–2405 (GRSSRGGQQGSFSGQTSGRSQHQSGSRHG), 2414–2448 (SGQQGSHHGHSSSSGTHNSGSSQSSSTQWSHGSGS), and 2458–2471 (GSTSGQTASSTRQG). Arg2381 carries the omega-N-methylarginine modification. Positions 2472–2482 (SGQGQASGSGR) are enriched in gly residues.

This sequence belongs to the S100-fused protein family. In the N-terminal section; belongs to the S-100 family. Post-translationally, processed during the process of epidermal differentiation. Forms covalent cross-links mediated by transglutaminase TGM3, between glutamine and the epsilon-amino group of lysine residues (in vitro). Embryonic skin. Highest level in the adult forestomach followed by the skin. Lower levels in the tongue, esophagus. Detected in the granular and cornified layers of the mature epidermis.

The protein resides in the cytoplasmic granule. Functionally, component of the epidermal cornified cell envelopes. In Mus musculus (Mouse), this protein is Hornerin (Hrnr).